A 175-amino-acid polypeptide reads, in one-letter code: ATP synthase subunit b (175 aa).

Residues 22 to 42 (LNLLETNIINIAIVFGLLIFL) traverse the membrane as a helical segment.

Belongs to the ATPase B chain family. F-type ATPases have 2 components, F(1) - the catalytic core - and F(0) - the membrane proton channel. F(1) has five subunits: alpha(3), beta(3), gamma(1), delta(1), epsilon(1). F(0) has four main subunits: a(1), b(1), b'(1) and c(10-14). The alpha and beta chains form an alternating ring which encloses part of the gamma chain. F(1) is attached to F(0) by a central stalk formed by the gamma and epsilon chains, while a peripheral stalk is formed by the delta, b and b' chains.

The protein localises to the cell inner membrane. F(1)F(0) ATP synthase produces ATP from ADP in the presence of a proton or sodium gradient. F-type ATPases consist of two structural domains, F(1) containing the extramembraneous catalytic core and F(0) containing the membrane proton channel, linked together by a central stalk and a peripheral stalk. During catalysis, ATP synthesis in the catalytic domain of F(1) is coupled via a rotary mechanism of the central stalk subunits to proton translocation. Its function is as follows. Component of the F(0) channel, it forms part of the peripheral stalk, linking F(1) to F(0). The polypeptide is ATP synthase subunit b (Gloeobacter violaceus (strain ATCC 29082 / PCC 7421)).